Here is a 200-residue protein sequence, read N- to C-terminus: Large ribosomal subunit protein uL4 (200 aa).

Residues 38-73 are disordered; sequence GRQGTKGQKSRSDVSGGGKRPWRQKGTGRARAGTTR.

Belongs to the universal ribosomal protein uL4 family. Part of the 50S ribosomal subunit.

In terms of biological role, one of the primary rRNA binding proteins, this protein initially binds near the 5'-end of the 23S rRNA. It is important during the early stages of 50S assembly. It makes multiple contacts with different domains of the 23S rRNA in the assembled 50S subunit and ribosome. Its function is as follows. Forms part of the polypeptide exit tunnel. This Ectopseudomonas mendocina (strain ymp) (Pseudomonas mendocina) protein is Large ribosomal subunit protein uL4.